Reading from the N-terminus, the 487-residue chain is UDP-N-acetylmuramate--L-alanine ligase (487 aa).

124 to 130 (GTHGKTT) contributes to the ATP binding site.

It belongs to the MurCDEF family.

It localises to the cytoplasm. The catalysed reaction is UDP-N-acetyl-alpha-D-muramate + L-alanine + ATP = UDP-N-acetyl-alpha-D-muramoyl-L-alanine + ADP + phosphate + H(+). Its pathway is cell wall biogenesis; peptidoglycan biosynthesis. In terms of biological role, cell wall formation. The polypeptide is UDP-N-acetylmuramate--L-alanine ligase (Acaryochloris marina (strain MBIC 11017)).